Reading from the N-terminus, the 232-residue chain is Large ribosomal subunit protein uL1 (232 aa).

It belongs to the universal ribosomal protein uL1 family. In terms of assembly, part of the 50S ribosomal subunit.

Binds directly to 23S rRNA. The L1 stalk is quite mobile in the ribosome, and is involved in E site tRNA release. In terms of biological role, protein L1 is also a translational repressor protein, it controls the translation of the L11 operon by binding to its mRNA. This is Large ribosomal subunit protein uL1 from Burkholderia multivorans (strain ATCC 17616 / 249).